The following is a 461-amino-acid chain: Cysteine--tRNA ligase (461 aa).

Residue cysteine 30 participates in Zn(2+) binding. The 'HIGH' region signature appears at 32 to 42 (VTVYDLCHIGH). Positions 211, 236, and 240 each coordinate Zn(2+). A 'KMSKS' region motif is present at residues 268–272 (KMSKS). Residue lysine 271 participates in ATP binding.

The protein belongs to the class-I aminoacyl-tRNA synthetase family. In terms of assembly, monomer. Requires Zn(2+) as cofactor.

Its subcellular location is the cytoplasm. It catalyses the reaction tRNA(Cys) + L-cysteine + ATP = L-cysteinyl-tRNA(Cys) + AMP + diphosphate. In Shewanella sp. (strain MR-7), this protein is Cysteine--tRNA ligase.